The chain runs to 563 residues: Arginine--tRNA ligase (563 aa).

The short motif at 121–131 (PNIAKPFSIGH) is the 'HIGH' region element.

Belongs to the class-I aminoacyl-tRNA synthetase family. In terms of assembly, monomer.

It localises to the cytoplasm. The catalysed reaction is tRNA(Arg) + L-arginine + ATP = L-arginyl-tRNA(Arg) + AMP + diphosphate. The chain is Arginine--tRNA ligase from Streptococcus pyogenes serotype M1.